The sequence spans 315 residues: Methionyl-tRNA formyltransferase (315 aa).

117–120 (SLLP) lines the (6S)-5,6,7,8-tetrahydrofolate pocket.

This sequence belongs to the Fmt family.

It carries out the reaction L-methionyl-tRNA(fMet) + (6R)-10-formyltetrahydrofolate = N-formyl-L-methionyl-tRNA(fMet) + (6S)-5,6,7,8-tetrahydrofolate + H(+). Functionally, attaches a formyl group to the free amino group of methionyl-tRNA(fMet). The formyl group appears to play a dual role in the initiator identity of N-formylmethionyl-tRNA by promoting its recognition by IF2 and preventing the misappropriation of this tRNA by the elongation apparatus. The chain is Methionyl-tRNA formyltransferase from Methylibium petroleiphilum (strain ATCC BAA-1232 / LMG 22953 / PM1).